The chain runs to 237 residues: Ribosomal RNA small subunit methyltransferase G (237 aa).

Residues G76, F81, 99-101 (DSS), 128-129 (IE), and R147 each bind S-adenosyl-L-methionine.

This sequence belongs to the methyltransferase superfamily. RNA methyltransferase RsmG family.

It is found in the cytoplasm. Its function is as follows. Specifically methylates the N7 position of a guanine in 16S rRNA. The chain is Ribosomal RNA small subunit methyltransferase G from Prochlorococcus marinus (strain MIT 9312).